The sequence spans 553 residues: Copine-9 (553 aa).

C2 domains are found at residues 1–125 (MSLG…ERTL) and 132–255 (KCGT…FTVY). N-linked (GlcNAc...) asparagine glycosylation occurs at Asn95. The Ca(2+) site is built by Asp163, Asp169, Asp225, Asp227, and Asp233. The region spanning 299 to 500 (NFTVAIDFTA…VQFVPFRDYV (202 aa)) is the VWFA domain. A disordered region spans residues 531-553 (TRDIQPRPPPPANPSPIPAPEQP). Positions 536-553 (PRPPPPANPSPIPAPEQP) are enriched in pro residues.

Belongs to the copine family. The cofactor is Ca(2+). Expressed in melanocytes.

Probable calcium-dependent phospholipid-binding protein that may play a role in calcium-mediated intracellular processes. Plays a role in dendrite formation by melanocytes. In Homo sapiens (Human), this protein is Copine-9.